The chain runs to 460 residues: DL-alanine permease SerP2 (460 aa).

The next 12 membrane-spanning stretches (helical) occupy residues 26 to 46 (LIAIAGTIGTGLFLGAGKSIH), 47 to 67 (LTGPSIIFVYLIIGALMYILL), 98 to 118 (FIQWSYLLVVVFVAMAELIAI), 124 to 144 (FWLPDLPIWMTEVFVLVLLTL), 160 to 180 (FGMIKIVAIIGLILTAIILIF), 209 to 229 (FFESFQMVMFAFVSMEFIGMT), 246 to 266 (QIPIRIVLFYIGALLAIMSIY), 278 to 298 (FVTIFQLIGIKWAAALVNFVV), 344 to 364 (ALLFTSLLILFTPFISMIPAI), 368 to 388 (FVFITSVATNLFLVVYLMTLI), 410 to 430 (HIFIPLAIAGFVLIFISLFCF), and 433 to 453 (TIIPAIGSVIWVLIFGLFTFF).

This sequence belongs to the amino acid-polyamine-organocation (APC) superfamily. Amino acid transporter (AAT) (TC 2.A.3.1) family.

It is found in the cell membrane. Transports DL-alanine, DL-serine and glycine. The preferred substrate is DL-alanine. L-serine is a low-affinity substrate. The sequence is that of DL-alanine permease SerP2 from Lactococcus lactis subsp. cremoris (strain MG1363).